The following is a 77-amino-acid chain: uncharacterized protein (77 aa).

The span at 1–15 (MNRTSESVEPQQNEK) shows a compositional bias: polar residues. 2 disordered regions span residues 1-20 (MNRTSESVEPQQNEKTAVHW) and 31-52 (TYSNEDDEDNEEGDESRPQRTF). Over residues 33-44 (SNEDDEDNEEGD) the composition is skewed to acidic residues.

This is an uncharacterized protein from Schizosaccharomyces pombe (strain 972 / ATCC 24843) (Fission yeast).